Here is a 161-residue protein sequence, read N- to C-terminus: MAEVANNEQQAPQFNIQRVYTKDVSFETPNSPAVFQKEWNPEVKLDLDTRSAKLADDVYEVVLSLTVTAQNAGETAFLCEVQQAGIFSIAGLSEPQLAHSLGAYCPNILFPYAREAVGSLVGRGTFPQLNLAPVNFDALFAQYVQQRQAAAAAPAAEEANA.

Belongs to the SecB family. Homotetramer, a dimer of dimers. One homotetramer interacts with 1 SecA dimer.

Its subcellular location is the cytoplasm. In terms of biological role, one of the proteins required for the normal export of preproteins out of the cell cytoplasm. It is a molecular chaperone that binds to a subset of precursor proteins, maintaining them in a translocation-competent state. It also specifically binds to its receptor SecA. In Shewanella sp. (strain MR-7), this protein is Protein-export protein SecB.